Here is a 132-residue protein sequence, read N- to C-terminus: Acetylcholinesterase (132 aa).

N37 carries an N-linked (GlcNAc...) asparagine glycan. C45 and C72 form a disulfide bridge.

The protein belongs to the type-B carboxylesterase/lipase family.

The protein resides in the synapse. The protein localises to the secreted. Its subcellular location is the cell membrane. It catalyses the reaction acetylcholine + H2O = choline + acetate + H(+). Functionally, rapidly hydrolyzes choline released into the synapse. In Culex pipiens pipiens (Northern house mosquito), this protein is Acetylcholinesterase (ACE-1).